Reading from the N-terminus, the 154-residue chain is MATFSQKPTEVVKKWVIIDAENLVLGRLAAFVANRLRGKHKATFTPHVDDGDNVIVINADKISLTGKKYTDKKYYWHTGYIGGIKKRTARQILEGRFPERVVEKAVERMIPRGPLGRRQLKNLRVYAGSQHPHAAQQPEALDVGALNRKNKRIA.

The protein belongs to the universal ribosomal protein uL13 family. Part of the 50S ribosomal subunit.

Its function is as follows. This protein is one of the early assembly proteins of the 50S ribosomal subunit, although it is not seen to bind rRNA by itself. It is important during the early stages of 50S assembly. The sequence is that of Large ribosomal subunit protein uL13 from Bartonella henselae (strain ATCC 49882 / DSM 28221 / CCUG 30454 / Houston 1) (Rochalimaea henselae).